The primary structure comprises 307 residues: Ornithine carbamoyltransferase (307 aa).

Residues 51–54, Gln-78, Arg-102, and 129–132 contribute to the carbamoyl phosphate site; these read STRT and HPVQ. Residues Asn-159, Asp-223, and 227-228 each bind L-ornithine; that span reads SM. Residues 263 to 264 and Arg-291 each bind carbamoyl phosphate; that span reads CL.

This sequence belongs to the aspartate/ornithine carbamoyltransferase superfamily. OTCase family.

The protein resides in the cytoplasm. It carries out the reaction carbamoyl phosphate + L-ornithine = L-citrulline + phosphate + H(+). The protein operates within amino-acid biosynthesis; L-arginine biosynthesis; L-arginine from L-ornithine and carbamoyl phosphate: step 1/3. Functionally, reversibly catalyzes the transfer of the carbamoyl group from carbamoyl phosphate (CP) to the N(epsilon) atom of ornithine (ORN) to produce L-citrulline. This is Ornithine carbamoyltransferase from Wolinella succinogenes (strain ATCC 29543 / DSM 1740 / CCUG 13145 / JCM 31913 / LMG 7466 / NCTC 11488 / FDC 602W) (Vibrio succinogenes).